A 305-amino-acid polypeptide reads, in one-letter code: Translation initiation factor eIF2B subunit alpha (305 aa).

An N-acetylserine modification is found at S2. T291 carries the post-translational modification Phosphothreonine.

Belongs to the eIF-2B alpha/beta/delta subunits family. As to quaternary structure, component of the translation initiation factor 2B (eIF2B) complex which is a heterodecamer of two sets of five different subunits: alpha, beta, gamma, delta and epsilon. Subunits alpha, beta and delta comprise a regulatory subcomplex and subunits epsilon and gamma comprise a catalytic subcomplex. Within the complex, the hexameric regulatory complex resides at the center, with the two heterodimeric catalytic subcomplexes bound on opposite sides.

The protein resides in the cytoplasm. It localises to the cytosol. Acts as a component of the translation initiation factor 2B (eIF2B) complex, which catalyzes the exchange of GDP for GTP on the eukaryotic initiation factor 2 (eIF2) complex gamma subunit. Its guanine nucleotide exchange factor activity is repressed when bound to eIF2 complex phosphorylated on the alpha subunit, thereby limiting the amount of methionyl-initiator methionine tRNA available to the ribosome and consequently global translation is repressed. It activates the translation of GCN4 in response to low amino acid, carbon, or purine availability, by suppressing the inhibitory effects of multiple uORFs present in the leader of GCN4 mRNA. It may promote either repression or activation of GCN4 expression depending on amino acid availability. Modulation of GCN3 regulatory function in response to amino acid availability occurs post-translationally. In Saccharomyces cerevisiae (strain ATCC 204508 / S288c) (Baker's yeast), this protein is Translation initiation factor eIF2B subunit alpha.